We begin with the raw amino-acid sequence, 191 residues long: Putative inactive glutathione hydrolase 4 (191 aa).

The active-site Nucleophile is Thr-54. Residues Thr-72, Asn-74, Glu-93, Asp-96, 126 to 127 (SS), and 147 to 148 (GG) contribute to the L-glutamate site.

The protein belongs to the gamma-glutamyltransferase family. Expressed at low levels in embryo, roots and leaves. In mature plants, expression is restricted to vascular tissues of roots, leaves, flowers and siliques.

This Arabidopsis thaliana (Mouse-ear cress) protein is Putative inactive glutathione hydrolase 4 (GGT4).